Reading from the N-terminus, the 320-residue chain is Malate dehydrogenase (320 aa).

Residues 10-15 and aspartate 34 each bind NAD(+); that span reads GSGMIG. Residues arginine 83 and arginine 89 each contribute to the substrate site. Residues asparagine 96 and 119 to 121 contribute to the NAD(+) site; that span reads ITN. Substrate is bound by residues asparagine 121 and arginine 152. Histidine 176 (proton acceptor) is an active-site residue.

Belongs to the LDH/MDH superfamily. MDH type 3 family.

The enzyme catalyses (S)-malate + NAD(+) = oxaloacetate + NADH + H(+). Functionally, catalyzes the reversible oxidation of malate to oxaloacetate. The protein is Malate dehydrogenase of Bartonella tribocorum (strain CIP 105476 / IBS 506).